The sequence spans 910 residues: E3 ubiquitin-protein ligase MARCHF6 (910 aa).

Position 1 is an N-acetylmethionine (Met-1). The RING-CH-type zinc finger occupies 1–62 (MDTAEEDICR…ELCKHRFAFT (62 aa)). Over 1 to 91 (MDTAEEDICR…LVTSIGTAIR (91 aa)) the chain is Cytoplasmic. The Zn(2+) site is built by Cys-9, Cys-12, Cys-26, Cys-28, His-36, Cys-39, Cys-52, and Cys-55. The helical transmembrane segment at 92–112 (YWFHYTLVAFAWLGVVPLTAC) threads the bilayer. Residues 113–142 (RIYKCLFTGSVSSLLTLPLDMLSTENLLAD) are Extracellular-facing. Residues 143 to 163 (CLQGCFVVTCTLCAFISLVWL) traverse the membrane as a helical segment. The Cytoplasmic segment spans residues 164 to 283 (REQIVHGGAP…WERMLGLDGS (120 aa)). The segment at 185 to 256 (AAGHHQNEAP…AADANNGAQD (72 aa)) is disordered. The segment covering 223–248 (DAQDDQAEEEEEDNEEEDDAGVEDAA) has biased composition (acidic residues). Residues 284 to 304 (LVFLEHVFWVVSLNTLFILVF) form a helical membrane-spanning segment. Residues 305–336 (AFCPYHIGHFSLVGLGFEEHVQASHFEGLITT) lie on the Extracellular side of the membrane. A helical membrane pass occupies residues 337–357 (IVGYILLAITLIICHGLATLV). At 358-376 (KFHRSRRLLGVCYIVVKVS) the chain is on the cytoplasmic side. A helical membrane pass occupies residues 377–397 (LLVVVEIGVFPLICGWWLDIC). Topologically, residues 398-421 (SLEMFDATLKDRELSFQSAPGTTM) are extracellular. Residues 422-442 (FLHWLVGMVYVFYFASFILLL) form a helical membrane-spanning segment. The Cytoplasmic portion of the chain corresponds to 443–480 (REVLRPGVLWFLRNLNDPDFNPVQEMIHLPIYRHLRRF). The chain crosses the membrane as a helical span at residues 481 to 501 (ILSVIVFGSIVLLMLWLPIRI). At 502–519 (IKSVLPNFLPYNVMLYSD) the chain is on the extracellular side. Residues 520–540 (APVSELSLELLLLQVVLPALL) form a helical membrane-spanning segment. Over 541–632 (EQRTHEAVAE…YRRPLNFPLR (92 aa)) the chain is Cytoplasmic. A helical membrane pass occupies residues 633-653 (IFLLIVFMCITLLIASLICLT). The Extracellular portion of the chain corresponds to 654-678 (LPVFAGRWLMSFWTGTAKIHELYTA). A helical membrane pass occupies residues 679–699 (ACGLYVCWLTIRAVTVMVAWM). Topologically, residues 700–721 (PQGRRVVFQKVKEWSLMIMKTL) are cytoplasmic. A helical membrane pass occupies residues 722-742 (IVAVLLAGVVPLLLGLLFELV). Topologically, residues 743–764 (IVAPLRVPLDQTPLFYPWQDWA) are extracellular. The chain crosses the membrane as a helical span at residues 765 to 785 (LGVLHAKIIAAITLMGPQWWL). At 786–815 (KTVIEQVYANGIRNIDLHYIVRKLAAPVIS) the chain is on the cytoplasmic side. A helical transmembrane segment spans residues 816–836 (VLLLSLCVPYVIASGVVPLLG). Topologically, residues 837-848 (VTAEMQNLVHRR) are extracellular. A helical membrane pass occupies residues 849-869 (IYPFLLMVVVLMAILSFQVRQ). Residues 870-910 (FKRLYEHIKNDKYLVGQRLVNYERKSGKQGSSPPPPQSSQE) are Cytoplasmic-facing.

Belongs to the DOA10/MARCHF6 family. Interacts with DIO2. Interacts with SQLE. Auto-ubiquitinated, which results in proteasomal degradation. Deubiquitinated by USP19; protecting MARCHF6 from p97-mediated proteasomal degradation.

The protein localises to the endoplasmic reticulum membrane. It carries out the reaction S-ubiquitinyl-[E2 ubiquitin-conjugating enzyme]-L-cysteine + [acceptor protein]-L-lysine = [E2 ubiquitin-conjugating enzyme]-L-cysteine + N(6)-ubiquitinyl-[acceptor protein]-L-lysine.. The protein operates within protein modification; protein ubiquitination. Its function is as follows. Endoplasmic reticulum membrane-associated E3 ubiquitin ligase that plays a critical role in mitigating endoplasmic reticulum stress, the regulation of cholesterol and lipid homeostasis, and ferroptosis. Acts as a pivotal component of both the Ac/N-degron pathway (targeting the N-terminal acetyl group of substrates) and the ER-associated protein degradation-cytosol (ERAD-C) pathway (targeting misfolded substrates). For instance, mediates the degradation of Ac/N-degron-bearing proteins such as the G-protein regulator RGS2 and the lipid droplet protein PLIN2. Suppresses endoplasmic reticulum stress and ferroptosis through cytosolic POMC degradation. Prevents ferroptosis by acting as a NADPH sensor during lipid peroxidation through its C-terminal regulatory region. Facilitates also the degradation of selected endoplasmic reticulum proteins by associating with signal peptide peptidase for the turnover of endogenous tail-anchored proteins. Promotes ubiquitination of DIO2, leading to its degradation. By ubiquitinating and thereby modulating the stability of many proteins of the cholesterol pathway including SQLE, CYP51A1, CYP11A1 and HMGCR, acts as a crucial post-translational regulator of cholesterol synthesis. The protein is E3 ubiquitin-protein ligase MARCHF6 (MARCHF6) of Pongo abelii (Sumatran orangutan).